We begin with the raw amino-acid sequence, 823 residues long: Putative E3 ubiquitin-protein ligase RF4 (823 aa).

Disordered stretches follow at residues 24–72, 224–291, and 432–464; these read TVSP…NGSV, SKLS…CSGS, and ESVT…SEEK. Positions 61-72 are enriched in polar residues; the sequence is KPQNHLSGNGSV. Low complexity predominate over residues 224–240; sequence SKLSDSESLGAESNPPK. Positions 267–282 are enriched in polar residues; the sequence is FPNTPNSKKTQSSGTT. Residues 453–464 are compositionally biased toward basic and acidic residues; the sequence is SEKKSGSESEEK. Residues 536 to 738 adopt a coiled-coil conformation; the sequence is ELKALRKERE…ELKLKSDYSR (203 aa). The segment at 768 to 808 adopts an RING-type zinc-finger fold; the sequence is CVMCLSEEMSVIFLPCAHQVLCFKCNQLHEKEGMMDCPSCR.

This sequence belongs to the RING-type zinc finger family.

The catalysed reaction is S-ubiquitinyl-[E2 ubiquitin-conjugating enzyme]-L-cysteine + [acceptor protein]-L-lysine = [E2 ubiquitin-conjugating enzyme]-L-cysteine + N(6)-ubiquitinyl-[acceptor protein]-L-lysine.. Its pathway is protein modification; protein ubiquitination. The sequence is that of Putative E3 ubiquitin-protein ligase RF4 (RF4) from Arabidopsis thaliana (Mouse-ear cress).